A 562-amino-acid chain; its full sequence is Sulfite reductase [NADPH] hemoprotein beta-component (562 aa).

The [4Fe-4S] cluster site is built by C426, C432, C471, and C475. C475 contributes to the siroheme binding site.

The protein belongs to the nitrite and sulfite reductase 4Fe-4S domain family. In terms of assembly, alpha(8)-beta(8). The alpha component is a flavoprotein, the beta component is a hemoprotein. Requires siroheme as cofactor. [4Fe-4S] cluster is required as a cofactor.

It carries out the reaction hydrogen sulfide + 3 NADP(+) + 3 H2O = sulfite + 3 NADPH + 4 H(+). The protein operates within sulfur metabolism; hydrogen sulfide biosynthesis; hydrogen sulfide from sulfite (NADPH route): step 1/1. In terms of biological role, component of the sulfite reductase complex that catalyzes the 6-electron reduction of sulfite to sulfide. This is one of several activities required for the biosynthesis of L-cysteine from sulfate. The protein is Sulfite reductase [NADPH] hemoprotein beta-component of Shewanella denitrificans (strain OS217 / ATCC BAA-1090 / DSM 15013).